The sequence spans 233 residues: tRNA (guanine-N(7)-)-methyltransferase (233 aa).

S-adenosyl-L-methionine is bound by residues glutamate 62, glutamate 87, aspartate 114, and aspartate 136. Residue aspartate 136 is part of the active site. Residues lysine 140, aspartate 172, and 211-214 (TRYE) contribute to the substrate site.

It belongs to the class I-like SAM-binding methyltransferase superfamily. TrmB family.

The enzyme catalyses guanosine(46) in tRNA + S-adenosyl-L-methionine = N(7)-methylguanosine(46) in tRNA + S-adenosyl-L-homocysteine. It participates in tRNA modification; N(7)-methylguanine-tRNA biosynthesis. Catalyzes the formation of N(7)-methylguanine at position 46 (m7G46) in tRNA. The chain is tRNA (guanine-N(7)-)-methyltransferase from Erythrobacter litoralis (strain HTCC2594).